A 600-amino-acid polypeptide reads, in one-letter code: Dihydroxy-acid dehydratase (600 aa).

D82 is a Mg(2+) binding site. Position 123 (C123) interacts with [2Fe-2S] cluster. The Mg(2+) site is built by D124 and K125. At K125 the chain carries N6-carboxylysine. C192 is a binding site for [2Fe-2S] cluster. Residue E489 participates in Mg(2+) binding. The Proton acceptor role is filled by S515.

It belongs to the IlvD/Edd family. In terms of assembly, homodimer. [2Fe-2S] cluster serves as cofactor. Requires Mg(2+) as cofactor.

The catalysed reaction is (2R)-2,3-dihydroxy-3-methylbutanoate = 3-methyl-2-oxobutanoate + H2O. It catalyses the reaction (2R,3R)-2,3-dihydroxy-3-methylpentanoate = (S)-3-methyl-2-oxopentanoate + H2O. It functions in the pathway amino-acid biosynthesis; L-isoleucine biosynthesis; L-isoleucine from 2-oxobutanoate: step 3/4. The protein operates within amino-acid biosynthesis; L-valine biosynthesis; L-valine from pyruvate: step 3/4. Its function is as follows. Functions in the biosynthesis of branched-chain amino acids. Catalyzes the dehydration of (2R,3R)-2,3-dihydroxy-3-methylpentanoate (2,3-dihydroxy-3-methylvalerate) into 2-oxo-3-methylpentanoate (2-oxo-3-methylvalerate) and of (2R)-2,3-dihydroxy-3-methylbutanoate (2,3-dihydroxyisovalerate) into 2-oxo-3-methylbutanoate (2-oxoisovalerate), the penultimate precursor to L-isoleucine and L-valine, respectively. The chain is Dihydroxy-acid dehydratase from Phocaeicola vulgatus (strain ATCC 8482 / DSM 1447 / JCM 5826 / CCUG 4940 / NBRC 14291 / NCTC 11154) (Bacteroides vulgatus).